Here is a 379-residue protein sequence, read N- to C-terminus: Putative glutamate--cysteine ligase 2 (379 aa).

The protein belongs to the glutamate--cysteine ligase type 2 family. YbdK subfamily.

The catalysed reaction is L-cysteine + L-glutamate + ATP = gamma-L-glutamyl-L-cysteine + ADP + phosphate + H(+). Its function is as follows. ATP-dependent carboxylate-amine ligase which exhibits weak glutamate--cysteine ligase activity. This Mycobacterium avium (strain 104) protein is Putative glutamate--cysteine ligase 2.